A 767-amino-acid polypeptide reads, in one-letter code: Photosystem I P700 chlorophyll a apoprotein A1 (767 aa).

The interval 1–22 (MTISPPESGEKNKKVLEDPVKA) is disordered. The segment covering 8-22 (SGEKNKKVLEDPVKA) has biased composition (basic and acidic residues). A run of 8 helical transmembrane segments spans residues 76-99 (IFSA…FHGA), 162-185 (LMAL…FHYH), 201-225 (LNHH…HIGA), 309-327 (VSHH…GHMY), 368-391 (RHAQ…HHMY), 407-433 (LGLF…IAMV), 455-477 (ALIS…LYIH), and 558-576 (LMIH…LILL). [4Fe-4S] cluster-binding residues include Cys600 and Cys609. 2 helical membrane passes run 616-637 (HVFL…HFSW) and 681-703 (ISMY…MFLF). His692 is a binding site for divinylchlorophyll a'. Met700 and Tyr708 together coordinate divinyl chlorophyll a. Trp709 is a binding site for phylloquinone. A helical membrane pass occupies residues 741-761 (AVGVTHFLVGGIATTWAFFHA).

Belongs to the PsaA/PsaB family. As to quaternary structure, the PsaA/B heterodimer binds the P700 divinyl chlorophyll special pair and subsequent electron acceptors. PSI consists of a core antenna complex that captures photons, and an electron transfer chain that converts photonic excitation into a charge separation. The cyanobacterial PSI reaction center is composed of one copy each of PsaA,B,C,D,E,F,I,J,K,L,M and X, and forms trimeric complexes. Requires PSI electron transfer chain: 5 divinyl chlorophyll a, 1 divinyl chlorophyll a', 2 phylloquinones and 3 4Fe-4S clusters. PSI core antenna: 90 divinyl chlorophyll a, 22 carotenoids, 3 phospholipids and 1 galactolipid. P700 is a divinyl chlorophyll a/divinyl chlorophyll a' dimer, A0 is one or more divinyl chlorophyll a, A1 is one or both phylloquinones and FX is a shared 4Fe-4S iron-sulfur center. as cofactor.

The protein resides in the cellular thylakoid membrane. The enzyme catalyses reduced [plastocyanin] + hnu + oxidized [2Fe-2S]-[ferredoxin] = oxidized [plastocyanin] + reduced [2Fe-2S]-[ferredoxin]. PsaA and PsaB bind P700, the primary electron donor of photosystem I (PSI), as well as the electron acceptors A0, A1 and FX. PSI is a plastocyanin/cytochrome c6-ferredoxin oxidoreductase, converting photonic excitation into a charge separation, which transfers an electron from the donor P700 chlorophyll pair to the spectroscopically characterized acceptors A0, A1, FX, FA and FB in turn. Oxidized P700 is reduced on the lumenal side of the thylakoid membrane by plastocyanin or cytochrome c6. The polypeptide is Photosystem I P700 chlorophyll a apoprotein A1 (Prochlorococcus marinus (strain MIT 9301)).